The sequence spans 195 residues: Der GTPase-activating protein YihI (195 aa).

The tract at residues 1–81 (MSRTKKTRRI…KAVVKEVKDP (81 aa)) is disordered. Basic and acidic residues-rich tracts occupy residues 9 to 23 (RITDIMPARKTDKPK), 38 to 49 (TRYELDAQAREE), and 66 to 81 (DPAEQKKAVVKEVKDP).

This sequence belongs to the YihI family. In terms of assembly, interacts with Der.

Functionally, a GTPase-activating protein (GAP) that modifies Der/EngA GTPase function. May play a role in ribosome biogenesis. This Mannheimia haemolytica (Pasteurella haemolytica) protein is Der GTPase-activating protein YihI.